The following is a 287-amino-acid chain: GTPase Era (287 aa).

The 164-residue stretch at 11 to 174 (RSGFVAVIGR…RSYLASSLPE (164 aa)) folds into the Era-type G domain. GTP-binding positions include 19–26 (GRTNVGKS) and 66–70 (DTPGI). The region spanning 205–273 (LRDELPQALA…PLTLRVKVQR (69 aa)) is the KH type-2 domain.

It belongs to the TRAFAC class TrmE-Era-EngA-EngB-Septin-like GTPase superfamily. Era GTPase family. In terms of assembly, monomer.

Its subcellular location is the cytoplasm. The protein localises to the cell membrane. An essential GTPase that binds both GDP and GTP, with rapid nucleotide exchange. Plays a role in 16S rRNA processing and 30S ribosomal subunit biogenesis and possibly also in cell cycle regulation and energy metabolism. The chain is GTPase Era from Acidimicrobium ferrooxidans (strain DSM 10331 / JCM 15462 / NBRC 103882 / ICP).